A 360-amino-acid polypeptide reads, in one-letter code: UPF0324 membrane protein plu2856 (360 aa).

The next 9 helical transmembrane spans lie at 20–42, 47–69, 104–126, 136–155, 167–189, 239–256, 277–299, 304–326, and 333–355; these read LIPGLILAAILTAISIYAGNIPW, GLGTLTLAILAGIIVGNTVYPLL, VGITGLLIDAAMLSSTFFIAIWL, QTVILIGAGSSICGAAAIMA, VAVAVSTIVIFGTIAIFIYPWFY, MIRVMMLAPFLLLLSRYI, WFAVIFIAIAGFNSFNLLPAAIV, NIDTIMLTMAMGALGLTTHVSAI, and PILLALILFVWLMAGGLLINLGI.

The protein belongs to the UPF0324 family.

Its subcellular location is the cell membrane. The sequence is that of UPF0324 membrane protein plu2856 from Photorhabdus laumondii subsp. laumondii (strain DSM 15139 / CIP 105565 / TT01) (Photorhabdus luminescens subsp. laumondii).